A 61-amino-acid chain; its full sequence is Probable tautomerase lin2709 (61 aa).

Proline 2 serves as the catalytic Proton acceptor; via imino nitrogen.

Belongs to the 4-oxalocrotonate tautomerase family.

The polypeptide is Probable tautomerase lin2709 (Listeria innocua serovar 6a (strain ATCC BAA-680 / CLIP 11262)).